The following is a 167-amino-acid chain: Protein archease (167 aa).

Ala2 carries the post-translational modification N-acetylalanine. 3 residues coordinate Ca(2+): Asp39, Asp166, and Ile167.

Belongs to the archease family. Component of the tRNA-splicing ligase complex.

Its function is as follows. Component of the tRNA-splicing ligase complex required to facilitate the enzymatic turnover of catalytic subunit RTCB. Together with DDX1, acts by facilitating the guanylylation of RTCB, a key intermediate step in tRNA ligation. The chain is Protein archease (ZBTB8OS) from Homo sapiens (Human).